The primary structure comprises 102 residues: MERYDKATLNAAFAPEFRQNEGSLTSTLRTLLFFTALMITLPVGLYFSSKAYIFEGTLGMSNRDSYFYAAIVAVVTVHVVLAMFVYVAWSEGTRQWREGKQD.

Topologically, residues 1-30 are cytoplasmic; it reads MERYDKATLNAAFAPEFRQNEGSLTSTLRT. A helical transmembrane segment spans residues 31–51; the sequence is LLFFTALMITLPVGLYFSSKA. The Lumenal portion of the chain corresponds to 52–66; sequence YIFEGTLGMSNRDSY. The chain crosses the membrane as a helical span at residues 67 to 87; sequence FYAAIVAVVTVHVVLAMFVYV. The Cytoplasmic portion of the chain corresponds to 88-102; the sequence is AWSEGTRQWREGKQD.

The protein belongs to the VMA21 family. Associates with the V0 complex of the vacuolar ATPase (V-ATPase). Interacts with ATP6AP2.

The protein localises to the endoplasmic reticulum membrane. The protein resides in the endoplasmic reticulum-Golgi intermediate compartment membrane. It localises to the cytoplasmic vesicle. Its subcellular location is the COPII-coated vesicle membrane. Functionally, required for the assembly of the V0 complex of the vacuolar ATPase (V-ATPase) in the endoplasmic reticulum. This is Vacuolar ATPase assembly integral membrane protein VMA21 from Gallus gallus (Chicken).